The following is a 355-amino-acid chain: MENKRKQKDEIVLVNGSNDTTPNKKQKNELQVVSSGGGREIILGTERTSKLEHPIMQLIGHKGEIYSCKFNSYGTALASGGSDKEIFLWNVYGECINYSVLKGHKGTILELHWSTDSNEIYTACTDKSIGVWDSNKGELIKRIREHSGVVNSCCPARRGPPLVASGSDDRSARIFDTRSKGSTHLFQHKYPVTSVCFSDASDQLITGGIDNVIRVWDIRNQEDPLYTLASHQDTITSTSVSKDGAYLLSNSMDNSCKIWDIRPYAPPNRNIKTFNGAQNNFEKNLIKSSWSIDGRRIGCGSSDRQVYIWDTNTKQLQYCLPGHSGTVNEVTFHPNEPIIASCSSDKTIYLGEIKP.

7 WD repeats span residues 60–99 (GHKGEIYSCKFNSYGTALASGGSDKEIFLWNVYGECINYS), 103–142 (GHKGTILELHWSTDSNEIYTACTDKSIGVWDSNKGELIKR), 145–185 (EHSG…STHL), 187–226 (QHKYPVTSVCFSDASDQLITGGIDNVIRVWDIRNQEDPLY), 230–269 (SHQDTITSTSVSKDGAYLLSNSMDNSCKIWDIRPYAPPNR), 280–319 (NFEKNLIKSSWSIDGRRIGCGSSDRQVYIWDTNTKQLQYC), and 322–355 (GHSGTVNEVTFHPNEPIIASCSSDKTIYLGEIKP).

Component of the pre-catalytic and catalytic spliceosome complexes. Component of the postcatalytic spliceosome P complex. Part of the U5 snRNP complex. Component of the U4/U6-U5 tri-snRNP complex.

Its subcellular location is the nucleus. In terms of biological role, required for pre-mRNA splicing as component of the activated spliceosome. Component of the U5 small nuclear ribonucleoprotein (snRNP) complex and the U4/U6-U5 tri-snRNP complex, building blocks of the spliceosome. This is U5 small nuclear ribonucleoprotein 40 kDa protein (snrnp40) from Dictyostelium discoideum (Social amoeba).